The sequence spans 432 residues: Adenosylhomocysteinase (432 aa).

Ser-2 carries the N-acetylserine modification. Positions 57, 131, and 156 each coordinate substrate. 157-159 (TTT) is an NAD(+) binding site. Ser-183 is modified (phosphoserine). Substrate-binding residues include Lys-186 and Asp-190. N6-(2-hydroxyisobutyryl)lysine is present on Lys-186. A Phosphotyrosine modification is found at Tyr-193. Residues 222 to 227 (GDVGKG), Glu-243, Asn-248, 299 to 301 (IGH), Asn-346, and His-353 each bind NAD(+).

The protein belongs to the adenosylhomocysteinase family. In terms of assembly, homotetramer. Interaction with AHCYL1. Requires NAD(+) as cofactor.

The protein localises to the cytoplasm. Its subcellular location is the melanosome. It is found in the nucleus. It localises to the endoplasmic reticulum. It catalyses the reaction S-adenosyl-L-homocysteine + H2O = L-homocysteine + adenosine. It functions in the pathway amino-acid biosynthesis; L-homocysteine biosynthesis; L-homocysteine from S-adenosyl-L-homocysteine: step 1/1. Its function is as follows. Catalyzes the hydrolysis of S-adenosyl-L-homocysteine to form adenosine and homocysteine. Binds copper ions. This is Adenosylhomocysteinase (AHCY) from Homo sapiens (Human).